Reading from the N-terminus, the 180-residue chain is ATP-dependent protease subunit HslV (180 aa).

Threonine 7 is an active-site residue. 3 residues coordinate Na(+): alanine 162, cysteine 165, and threonine 168.

Belongs to the peptidase T1B family. HslV subfamily. As to quaternary structure, a double ring-shaped homohexamer of HslV is capped on each side by a ring-shaped HslU homohexamer. The assembly of the HslU/HslV complex is dependent on binding of ATP.

The protein localises to the cytoplasm. It catalyses the reaction ATP-dependent cleavage of peptide bonds with broad specificity.. With respect to regulation, allosterically activated by HslU binding. Protease subunit of a proteasome-like degradation complex believed to be a general protein degrading machinery. The chain is ATP-dependent protease subunit HslV from Dichelobacter nodosus (strain VCS1703A).